Consider the following 356-residue polypeptide: Putative ankyrin repeat protein R599 (356 aa).

ANK repeat units lie at residues 111-143 (NDDILLCTAIINCSSECLLYLLDKGIPIDFCDN), 152-182 (RLEKYIYTTRKNKSSCDMLKIVIDRGGNVNT), 183-213 (HNYEPLYSAVNDNNFDKIKLLVENGANKLSD), 215-238 (KRKITNTNLEIFQYLIDNRVELEV), 239-266 (NFDDIFLQSIINDDSECMKLFIELGANI), and 267-298 (NSIPTLELTKIIINARHEILEILINYGLDINN).

The polypeptide is Putative ankyrin repeat protein R599 (Acanthamoeba polyphaga (Amoeba)).